We begin with the raw amino-acid sequence, 94 residues long: Small ribosomal subunit protein uS19 (94 aa).

This sequence belongs to the universal ribosomal protein uS19 family.

In terms of biological role, protein S19 forms a complex with S13 that binds strongly to the 16S ribosomal RNA. The protein is Small ribosomal subunit protein uS19 of Wolbachia pipientis subsp. Culex pipiens (strain wPip).